The following is a 169-amino-acid chain: T-cell receptor gamma chain C region DFL12 (169 aa).

A c region region spans residues 1–136 (PSDKRLDADI…LQFMSTSAYY (136 aa)). The chain crosses the membrane as a helical span at residues 137–157 (TYLLLLLKSVIYLAIISFSLL). Residues 158–169 (RRTSVCCNEKRS) are Cytoplasmic-facing.

The protein localises to the membrane. In Mus musculus (Mouse), this protein is T-cell receptor gamma chain C region DFL12.